The following is a 317-amino-acid chain: Olfactory receptor-like protein OLF3 (317 aa).

The Extracellular segment spans residues 1–25 (MGTGNQTWVREFVLLGLSSDWDTEV). An N-linked (GlcNAc...) asparagine glycan is attached at N5. Residues 26–49 (SLFVLFLITYMVTVLGNFLIILLI) traverse the membrane as a helical segment. The Cytoplasmic portion of the chain corresponds to 50–57 (RLDSRLHT). A helical membrane pass occupies residues 58 to 79 (PMYFFLTNLSLVDVSYATSIIP). Residues 80–100 (QMLAHLLAAHKAIPFVSCAAQ) lie on the Extracellular side of the membrane. Residues 101–120 (LFFSLGLGGIEFVLLAVMAY) form a helical membrane-spanning segment. Over 121–139 (DRYVAVCDPLRYSVIMHGG) the chain is Cytoplasmic. The helical transmembrane segment at 140–158 (LCTRLAITSWVSGSMNSLM) threads the bilayer. The Extracellular segment spans residues 159-196 (QTVITFQLPMCTNKYIDHISCELLAVVRLACVDTSSNE). The helical transmembrane segment at 197–219 (IAIMVSSIVLLMTPFCLVLLSYI) threads the bilayer. Over 220 to 236 (QIISTILKIQSTEGRKK) the chain is Cytoplasmic. The helical transmembrane segment at 237–260 (AFHTCASHLTVVVLCYGMAIFTYI) threads the bilayer. The Extracellular portion of the chain corresponds to 261-272 (QPRSSPSVLQEK). Residues 273–292 (LISLFYSVLTPMLNPMIYSV) form a helical membrane-spanning segment. Residues 293-317 (RNKEVKGAWQKLLGQLTGITSKLAT) lie on the Cytoplasmic side of the membrane.

Belongs to the G-protein coupled receptor 1 family.

The protein resides in the cell membrane. Functionally, putative odorant or sperm cell receptor. The protein is Olfactory receptor-like protein OLF3 of Canis lupus familiaris (Dog).